Reading from the N-terminus, the 153-residue chain is uncharacterized protein (153 aa).

Residues 1-19 form the signal peptide; that stretch reads MRKYIPLVLFIFSWPVLCA. Catalysis depends on residues Arg46, Glu54, and Arg88.

It belongs to the thermonuclease family.

This is an uncharacterized protein from Escherichia coli O157:H7.